A 424-amino-acid chain; its full sequence is Tyrosine--tRNA ligase (424 aa).

Tyr37 contacts L-tyrosine. The 'HIGH' region motif lies at Pro42–His51. Lys144 carries the N6-acetyllysine modification. The L-tyrosine site is built by Tyr175 and Gln179. The short motif at Lys235–Thr239 is the 'KMSKS' region element. ATP is bound at residue Lys238. In terms of domain architecture, S4 RNA-binding spans Ala357–Gly414.

Belongs to the class-I aminoacyl-tRNA synthetase family. TyrS type 1 subfamily. Homodimer.

The protein localises to the cytoplasm. The catalysed reaction is tRNA(Tyr) + L-tyrosine + ATP = L-tyrosyl-tRNA(Tyr) + AMP + diphosphate + H(+). Catalyzes the attachment of tyrosine to tRNA(Tyr) in a two-step reaction: tyrosine is first activated by ATP to form Tyr-AMP and then transferred to the acceptor end of tRNA(Tyr). The polypeptide is Tyrosine--tRNA ligase (Shigella flexneri serotype 5b (strain 8401)).